Reading from the N-terminus, the 155-residue chain is Small ribosomal subunit protein uS7 (155 aa).

This sequence belongs to the universal ribosomal protein uS7 family. Part of the 30S ribosomal subunit. Contacts proteins S9 and S11.

Functionally, one of the primary rRNA binding proteins, it binds directly to 16S rRNA where it nucleates assembly of the head domain of the 30S subunit. Is located at the subunit interface close to the decoding center, probably blocks exit of the E-site tRNA. This chain is Small ribosomal subunit protein uS7, found in Chlorobium limicola (strain DSM 245 / NBRC 103803 / 6330).